The following is a 72-amino-acid chain: Translation initiation factor IF-1 (72 aa).

One can recognise an S1-like domain in the interval 1 to 72 (MAREDHIEME…SKGRIVYRAR (72 aa)).

Belongs to the IF-1 family. As to quaternary structure, component of the 30S ribosomal translation pre-initiation complex which assembles on the 30S ribosome in the order IF-2 and IF-3, IF-1 and N-formylmethionyl-tRNA(fMet); mRNA recruitment can occur at any time during PIC assembly.

The protein resides in the cytoplasm. In terms of biological role, one of the essential components for the initiation of protein synthesis. Stabilizes the binding of IF-2 and IF-3 on the 30S subunit to which N-formylmethionyl-tRNA(fMet) subsequently binds. Helps modulate mRNA selection, yielding the 30S pre-initiation complex (PIC). Upon addition of the 50S ribosomal subunit IF-1, IF-2 and IF-3 are released leaving the mature 70S translation initiation complex. This Chromohalobacter salexigens (strain ATCC BAA-138 / DSM 3043 / CIP 106854 / NCIMB 13768 / 1H11) protein is Translation initiation factor IF-1.